A 322-amino-acid chain; its full sequence is Replication factor C small subunit (322 aa).

50 to 57 (GPAGTGKT) provides a ligand contact to ATP.

This sequence belongs to the activator 1 small subunits family. RfcS subfamily. Heteromultimer composed of small subunits (RfcS) and large subunits (RfcL).

In terms of biological role, part of the RFC clamp loader complex which loads the PCNA sliding clamp onto DNA. This Halobacterium salinarum (strain ATCC 700922 / JCM 11081 / NRC-1) (Halobacterium halobium) protein is Replication factor C small subunit.